Consider the following 240-residue polypeptide: 4-hydroxy-tetrahydrodipicolinate reductase (240 aa).

NAD(+)-binding positions include 79-81 (ATT) and 103-106 (SANM). The Proton donor/acceptor role is filled by His135. (S)-2,3,4,5-tetrahydrodipicolinate is bound at residue His136. Lys139 serves as the catalytic Proton donor. 145 to 146 (GT) contacts (S)-2,3,4,5-tetrahydrodipicolinate.

It belongs to the DapB family.

The protein localises to the cytoplasm. It carries out the reaction (S)-2,3,4,5-tetrahydrodipicolinate + NAD(+) + H2O = (2S,4S)-4-hydroxy-2,3,4,5-tetrahydrodipicolinate + NADH + H(+). It catalyses the reaction (S)-2,3,4,5-tetrahydrodipicolinate + NADP(+) + H2O = (2S,4S)-4-hydroxy-2,3,4,5-tetrahydrodipicolinate + NADPH + H(+). It participates in amino-acid biosynthesis; L-lysine biosynthesis via DAP pathway; (S)-tetrahydrodipicolinate from L-aspartate: step 4/4. Its function is as follows. Catalyzes the conversion of 4-hydroxy-tetrahydrodipicolinate (HTPA) to tetrahydrodipicolinate. In Staphylococcus aureus (strain MRSA252), this protein is 4-hydroxy-tetrahydrodipicolinate reductase.